The following is a 283-amino-acid chain: MAGNFWQSSHYLQWILDKQDLLKERQKDLKFLSEEEYWKLQIFFTNVIQALGEHLKLRQQVIATATVYFKRFYARYSLKSIDPVLMAPTCVFLASKVEEFGVVSNTRLIAATTSVLKTRFSYAFPKEFPYRMNHILECEFYLLELMDCCLIVYHPYRPLLQYVQDMGQEDVLLPLAWRIVNDTYRTDLCLLYPPFMIALACLHVACVVQQKDARQWFAELSVDMEKILEIIRVILKLYEQWKNFDERKEMATILSKMPKPKPPPNSEGEQGPNGSQNSSYSQS.

Residues 20–151 (DLLKERQKDL…LLELMDCCLI (132 aa)) enclose the Cyclin N-terminal domain. The disordered stretch occupies residues 252 to 283 (TILSKMPKPKPPPNSEGEQGPNGSQNSSYSQS). Polar residues predominate over residues 272-283 (PNGSQNSSYSQS). Residue S275 is modified to Phosphoserine.

It belongs to the cyclin family. Cyclin C subfamily. Component of the Mediator complex, which is composed of MED1, MED4, MED6, MED7, MED8, MED9, MED10, MED11, MED12, MED13, MED13L, MED14, MED15, MED16, MED17, MED18, MED19, MED20, MED21, MED22, MED23, MED24, MED25, MED26, MED27, MED29, MED30, MED31, CCNC, CDK8 and CDC2L6/CDK11. The MED12, MED13, CCNC and CDK8 subunits form a distinct module termed the CDK8 module. Mediator containing the CDK8 module is less active than Mediator lacking this module in supporting transcriptional activation. Individual preparations of the Mediator complex lacking one or more distinct subunits have been variously termed ARC, CRSP, DRIP, PC2, SMCC and TRAP. The cylin/CDK pair formed by CCNC/CDK8 also associates with the large subunit of RNA polymerase II.

It is found in the nucleus. In terms of biological role, component of the Mediator complex, a coactivator involved in regulated gene transcription of nearly all RNA polymerase II-dependent genes. Mediator functions as a bridge to convey information from gene-specific regulatory proteins to the basal RNA polymerase II transcription machinery. Mediator is recruited to promoters by direct interactions with regulatory proteins and serves as a scaffold for the assembly of a functional preinitiation complex with RNA polymerase II and the general transcription factors. Binds to and activates cyclin-dependent kinase CDK8 that phosphorylates the CTD (C-terminal domain) of the large subunit of RNA polymerase II (RNAp II), which may inhibit the formation of a transcription initiation complex. The polypeptide is Cyclin-C (Ccnc) (Mus musculus (Mouse)).